The primary structure comprises 182 residues: Ribulose bisphosphate carboxylase small subunit, chloroplastic 3 (182 aa).

The transit peptide at 1-41 directs the protein to the chloroplast; that stretch reads MASIMMNKSVVLSKECAKPLASPKVTLNKRGFATTIATKNR.

Belongs to the RuBisCO small chain family. Heterohexadecamer of 8 large and 8 small subunits.

It localises to the plastid. Its subcellular location is the chloroplast. In terms of biological role, ruBisCO catalyzes two reactions: the carboxylation of D-ribulose 1,5-bisphosphate, the primary event in carbon dioxide fixation, as well as the oxidative fragmentation of the pentose substrate. Both reactions occur simultaneously and in competition at the same active site. Although the small subunit is not catalytic it is essential for maximal activity. The polypeptide is Ribulose bisphosphate carboxylase small subunit, chloroplastic 3 (Acetabularia acetabulum (Mermaid's wine glass)).